Reading from the N-terminus, the 320-residue chain is MARKKIALIGSGMIGGTLAHIIGLKELGDVVLFDIAEGIPQGKALDIAESSPVDGFDVSLTGANSYDVIEGADVVIVTAGVARKPGMSRDDLLGINLKVMEQVGAGIKKYASSAFVICITNPLDAMVWALQKFSGLPTQKVVGMAGILDSARFRHFLSEEFKISVKDVTAFVLGGHGDSMVPLVRYSTVGGISLPDLVKMGWTTQEKIDQIIQRTRDGGAEIVSLLKTGSAFYAPAASAVSMAEAYLKDTKRVVPVAAYLSGQYGVKDTYVGVPVVIGAGGVERVIEIDLDKEEKAAFEKSVSAVQKLCEACIAVAPGLK.

Residues G10–G15 and D34 each bind NAD(+). R83 and R89 together coordinate substrate. NAD(+) is bound by residues N96 and I119 to N121. The substrate site is built by N121 and R152. Catalysis depends on H176, which acts as the Proton acceptor.

Belongs to the LDH/MDH superfamily. MDH type 3 family.

It catalyses the reaction (S)-malate + NAD(+) = oxaloacetate + NADH + H(+). In terms of biological role, catalyzes the reversible oxidation of malate to oxaloacetate. The sequence is that of Malate dehydrogenase from Bartonella henselae (strain ATCC 49882 / DSM 28221 / CCUG 30454 / Houston 1) (Rochalimaea henselae).